A 418-amino-acid chain; its full sequence is Putative ion-transport protein YfeO (418 aa).

12 helical membrane passes run Leu-10–Val-30, Asp-54–Ile-74, Ala-99–Pro-119, Glu-120–Pro-140, Ile-149–Ile-169, Leu-186–Pro-206, Ile-223–Cys-243, Val-258–Val-278, Asp-300–Phe-320, Gly-322–His-342, Val-343–Val-363, and Leu-371–Met-391.

Belongs to the chloride channel (TC 2.A.49) family.

It is found in the cell membrane. This Shigella boydii serotype 4 (strain Sb227) protein is Putative ion-transport protein YfeO.